A 180-amino-acid chain; its full sequence is Threonylcarbamoyl-AMP synthase (180 aa).

Residues Met-1–Pro-180 form the YrdC-like domain.

Belongs to the SUA5 family. TsaC subfamily.

The protein resides in the cytoplasm. The catalysed reaction is L-threonine + hydrogencarbonate + ATP = L-threonylcarbamoyladenylate + diphosphate + H2O. Required for the formation of a threonylcarbamoyl group on adenosine at position 37 (t(6)A37) in tRNAs that read codons beginning with adenine. Catalyzes the conversion of L-threonine, HCO(3)(-)/CO(2) and ATP to give threonylcarbamoyl-AMP (TC-AMP) as the acyladenylate intermediate, with the release of diphosphate. This is Threonylcarbamoyl-AMP synthase from Methylobacillus flagellatus (strain ATCC 51484 / DSM 6875 / VKM B-1610 / KT).